Reading from the N-terminus, the 338-residue chain is Dehydrogenase/reductase SDR family member 7 (338 aa).

The N-terminal stretch at Met1 to Ala28 is a signal peptide. NAD(+) contacts are provided by Ser60 and Ile62. Ser190 is a substrate binding site. NAD(+) contacts are provided by Tyr203, Lys207, and Ser239. The active-site Proton acceptor is Tyr203.

It belongs to the short-chain dehydrogenases/reductases (SDR) family.

Its subcellular location is the endoplasmic reticulum membrane. It carries out the reaction all-trans-retinol + NADP(+) = all-trans-retinal + NADPH + H(+). The catalysed reaction is 5alpha-androstane-3alpha,17beta-diol + NADP(+) = 17beta-hydroxy-5alpha-androstan-3-one + NADPH + H(+). NADPH-dependent oxidoreductase which catalyzes the reduction of a variety of compounds bearing carbonyl groups including steroids, retinoids and xenobiotics. Catalyzes the reduction/inactivation of 5alpha-dihydrotestosterone to 3alpha-androstanediol, with a possible role in the modulation of androgen receptor function. Involved in the reduction of all-trans-retinal to all-trans-retinol. Converts cortisone to 20beta-dihydrocortisone in vitro, although the physiological relevance of this activity is questionable. Reduces exogenous compounds such as quinones (1,2-naphtoquinone, 9,10-phenantrenequinone and benzoquinone) and other xenobiotics (alpha-diketones) in vitro, suggesting a role in the biotransformation of xenobiotics with carbonyl group. A dehydrogenase activity has not been detected so far. May play a role as tumor suppressor. This Mus musculus (Mouse) protein is Dehydrogenase/reductase SDR family member 7.